A 125-amino-acid chain; its full sequence is Aspercryptin biosynthesis cluster protein K (125 aa).

A disordered region spans residues 104-125 (QRAESVAGDSRPREHRQGAVGY). Residues 113–125 (SRPREHRQGAVGY) are compositionally biased toward basic and acidic residues.

It functions in the pathway secondary metabolite biosynthesis. In terms of biological role, part of the gene cluster that mediates the biosynthesis of aspercryptins, linear lipopeptides built from six amino acids including 2 highly unusual and nonproteogenic amino acids, 2-amino-octanoic acid (2aoa) and 2-amino-dodecanol (2adol). The core structure of aspercryptins is as follows: Ser/Ala-Thr-Ile/Val-2aoa-Asn-2adol. The first step of aspercryptin biosynthesis is the generation of the fatty acid precursors, octanoic and dodecanoic acids, by the FAS subunits atnF and atnM. The fatty acid precursors are likely transformed into the corresponding alpha-amino fatty acids in three steps. First, they are hydroxylated by the cytochrome P450 monooxygenase atnE, then oxidized to the corresponding alpha-keto acids by the NAD(P)-dependent oxidoreductase atnD, and finally converted to the alpha-amino fatty acids by the PLP-dependent aminotransferases atnH or atnJ. the alpha-amino fatty acids, 2-amino-octanoic and 2-amino-dodecanoic acids, are recognized, activated, and covalently tethered to the NRPS atnA by its fourth and sixth adenylation domains. The second module of atnA is the Thr module and contains an epimerase (E) domain responsible for the epimerization of Thr to D-allo-Thr. Additionally, despite atnA having only one epimerase domain, the first amino acid of aspercryptin A1 is D-Ser, suggesting that serine is either loaded directly as D-Ser on the first module or that the epimerase domain in the threonine module epimerizes both L-Ser and L-Thr. After condensation of the hexapeptide of aspercryptin, the C-terminal reductase (TE) domain might be involved in the reductive release and production of the aldehyde hexapeptide. Further reduction would generate aspercryptins. The variety of aspercryptins produced reflects the flexibility of the atnA NRPS, allowing incorporation of alanine instead of serine, valine for isoleucine, and a C10 fatty amino alcohol instead of the C12 version. AtnB seems to be involved in the selectivity for Ile versus Val by the third module. Moreover, type B, C and D aspercryptins have an additional N-terminal cichorine, acetyl and propionyl group respectively. The polypeptide is Aspercryptin biosynthesis cluster protein K (Emericella nidulans (strain FGSC A4 / ATCC 38163 / CBS 112.46 / NRRL 194 / M139) (Aspergillus nidulans)).